The chain runs to 570 residues: Urease subunit alpha (570 aa).

One can recognise a Urease domain in the interval 131–570 (GGFDSHIHFI…LPMAQRYFMY (440 aa)). Positions 136, 138, and 219 each coordinate Ni(2+). An N6-carboxylysine modification is found at K219. H221 contacts substrate. H248 and H274 together coordinate Ni(2+). Catalysis depends on H322, which acts as the Proton donor. D362 lines the Ni(2+) pocket.

The protein belongs to the metallo-dependent hydrolases superfamily. Urease alpha subunit family. Heterotrimer of UreA (gamma), UreB (beta) and UreC (alpha) subunits. Three heterotrimers associate to form the active enzyme. It depends on Ni cation as a cofactor. Post-translationally, carboxylation allows a single lysine to coordinate two nickel ions.

The protein resides in the cytoplasm. The catalysed reaction is urea + 2 H2O + H(+) = hydrogencarbonate + 2 NH4(+). It participates in nitrogen metabolism; urea degradation; CO(2) and NH(3) from urea (urease route): step 1/1. The sequence is that of Urease subunit alpha from Rhodopseudomonas palustris (strain BisB18).